The chain runs to 229 residues: Large ribosomal subunit protein uL1 (229 aa).

This sequence belongs to the universal ribosomal protein uL1 family. As to quaternary structure, part of the 50S ribosomal subunit.

In terms of biological role, binds directly to 23S rRNA. The L1 stalk is quite mobile in the ribosome, and is involved in E site tRNA release. Its function is as follows. Protein L1 is also a translational repressor protein, it controls the translation of the L11 operon by binding to its mRNA. The polypeptide is Large ribosomal subunit protein uL1 (Actinobacillus pleuropneumoniae serotype 3 (strain JL03)).